The following is a 375-amino-acid chain: Succinyl-diaminopimelate desuccinylase (375 aa).

Histidine 66 provides a ligand contact to Zn(2+). Aspartate 68 is a catalytic residue. Aspartate 99 is a binding site for Zn(2+). The active-site Proton acceptor is the glutamate 133. Glutamate 134, glutamate 162, and histidine 348 together coordinate Zn(2+).

The protein belongs to the peptidase M20A family. DapE subfamily. In terms of assembly, homodimer. The cofactor is Zn(2+). It depends on Co(2+) as a cofactor.

The catalysed reaction is N-succinyl-(2S,6S)-2,6-diaminopimelate + H2O = (2S,6S)-2,6-diaminopimelate + succinate. Its pathway is amino-acid biosynthesis; L-lysine biosynthesis via DAP pathway; LL-2,6-diaminopimelate from (S)-tetrahydrodipicolinate (succinylase route): step 3/3. Its function is as follows. Catalyzes the hydrolysis of N-succinyl-L,L-diaminopimelic acid (SDAP), forming succinate and LL-2,6-diaminopimelate (DAP), an intermediate involved in the bacterial biosynthesis of lysine and meso-diaminopimelic acid, an essential component of bacterial cell walls. This is Succinyl-diaminopimelate desuccinylase from Klebsiella pneumoniae (strain 342).